The chain runs to 97 residues: Eclosion hormone (97 aa).

The first 17 residues, 1–17, serve as a signal peptide directing secretion; sequence MNCKPLILCTFVAVAMC. Cystine bridges form between C48–C72, C52–C68, and C55–C83.

This sequence belongs to the insect eclosion hormone family. In terms of tissue distribution, expressed in a single pair of brain neurons which extend their processes the entire length of the central nervous system and also to the corpora cardiaca portion of the ring gland. These cells show massive depletion of immunoreactive Eh at ecdysis.

The protein resides in the secreted. In terms of biological role, neuropeptide that triggers the performance of ecdysis behaviors at the end of a molt. It triggers adult behavior patterns: larval, pupal and adult ecdysis, and plasticization during the molt. The sequence is that of Eclosion hormone (Eh) from Drosophila melanogaster (Fruit fly).